A 215-amino-acid chain; its full sequence is Probable transaldolase (215 aa).

The Schiff-base intermediate with substrate role is filled by Lys83.

The protein belongs to the transaldolase family. Type 3B subfamily.

Its subcellular location is the cytoplasm. The catalysed reaction is D-sedoheptulose 7-phosphate + D-glyceraldehyde 3-phosphate = D-erythrose 4-phosphate + beta-D-fructose 6-phosphate. The protein operates within carbohydrate degradation; pentose phosphate pathway; D-glyceraldehyde 3-phosphate and beta-D-fructose 6-phosphate from D-ribose 5-phosphate and D-xylulose 5-phosphate (non-oxidative stage): step 2/3. Transaldolase is important for the balance of metabolites in the pentose-phosphate pathway. This is Probable transaldolase from Clostridium perfringens (strain ATCC 13124 / DSM 756 / JCM 1290 / NCIMB 6125 / NCTC 8237 / Type A).